A 269-amino-acid polypeptide reads, in one-letter code: MAVVSLEDLLNAGVHFGHQTRRWNPKMSQYIYTARNGVHIIDLVQTAQLMEDAYQYVRNNADKGKRFLFVGTKRQAAGIIAQEASRCGANYVNQRWLGGMLTNWETIKTRVERLKELEAMEESGQIARRPKKEASVLRRELGKLQKYLGGIKTMRRPPDVVVIVDQRREYNAIQECQKLGIPMISLLDTNCDPDYADIPIPANDDAIRSIKLILGKLADAIYEGRHGQLDSDDDYEEFDESLAEGDYDDYDEEEDEDSETVSSQEGEEE.

A disordered region spans residues 228 to 269 (QLDSDDDYEEFDESLAEGDYDDYDEEEDEDSETVSSQEGEEE). Over residues 230–269 (DSDDDYEEFDESLAEGDYDDYDEEEDEDSETVSSQEGEEE) the composition is skewed to acidic residues.

This sequence belongs to the universal ribosomal protein uS2 family.

This chain is Small ribosomal subunit protein uS2, found in Crocosphaera subtropica (strain ATCC 51142 / BH68) (Cyanothece sp. (strain ATCC 51142)).